The chain runs to 554 residues: MIKMMVCGILLFEFSFLMMLMSLYLLYLNKEFFFEWNIYTFNSMKFNFLLLIDYKSLMFIFLVSMIFSMIIIYSISYMDLSELKMDRFLYLMILFLISMYMLILSPNMLSIILGWDGLGLISYCLVIYYMKMKSFTSGMVTILLNRLGDIGLLLIMGLMTYYGSWNLSFYKMNEFMMIYILLMAFTKSAQIPFSTWLPMAMMAPTPVSSLVHSSTLVTAGIYLLIRYVNLLDFNYKNYIMLIASLTMLFAGLVANFELDLKKVVAYSTLSQLGFMMSMLSIGSTELVFLHLFIHAMFKSLMFMCVGSYMHYMYSNQDIRMYYGMYYIYPMKSMILIFSILSLCGFPFLVGYYSKDLIIEMFFFSKMIYFSMINLIIGTIFTVSYSFRMILVLTSKFLMMNVIYSKEDKIMCISMMMMMIFSLIYSKLIFNLMNFNLLGINLLMIYKLMVFKMIMVGLIMGFNFYKLILLNNKIGYFKMSFLFMNLIYKIIYKKIIMMMFTYEVYIEKSIIEILSSKFMSVTLNIYELKISNLMINIYLTILIYLIYLLIYLINF.

A run of 15 helical transmembrane segments spans residues 6-26, 57-77, 93-113, 150-170, 175-197, 209-228, 238-258, 263-283, 286-306, 332-352, 379-399, 409-429, 441-461, 480-500, and 532-552; these read VCGILLFEFSFLMMLMSLYLL, LMFIFLVSMIFSMIIIYSISY, ILFLISMYMLILSPNMLSIIL, IGLLLIMGLMTYYGSWNLSFY, FMMIYILLMAFTKSAQIPFSTWL, SLVHSSTLVTAGIYLLIRYV, YIMLIASLTMLFAGLVANFEL, VVAYSTLSQLGFMMSMLSIGS, LVFLHLFIHAMFKSLMFMCVG, SMILIFSILSLCGFPFLVGYY, IFTVSYSFRMILVLTSKFLMM, IMCISMMMMMIFSLIYSKLIF, LLMIYKLMVFKMIMVGLIMGF, FLFMNLIYKIIYKKIIMMMFT, and LMINIYLTILIYLIYLLIYLI.

This sequence belongs to the complex I subunit 5 family.

It is found in the mitochondrion inner membrane. It carries out the reaction a ubiquinone + NADH + 5 H(+)(in) = a ubiquinol + NAD(+) + 4 H(+)(out). Core subunit of the mitochondrial membrane respiratory chain NADH dehydrogenase (Complex I) that is believed to belong to the minimal assembly required for catalysis. Complex I functions in the transfer of electrons from NADH to the respiratory chain. The immediate electron acceptor for the enzyme is believed to be ubiquinone. The sequence is that of NADH-ubiquinone oxidoreductase chain 5 (ND5) from Apis mellifera ligustica (Common honeybee).